The primary structure comprises 243 residues: MDGFDRSNAPVEYQRVEWISDIFVFGMGVCWLINYAGMIYTSLQEQTYSMAPLALCCNFAWEMVYGLIYPSKSRIEQGVFLAGLVVNLGVMYTAIRFAPNEWAHAPLVMNNITLIFALGVLGSLTGHLALAAEIGPALGYSWGAVACQLLLSVGGFCQLLGRSSSRGASYTLWLSRFIGSGCVVGFAILRYMYWSEAFNWLNSPLVLWSLGVFIAVDSLYGICLWNVKKYEHGQERSNARKAQ.

3 consecutive transmembrane segments (helical) span residues 19-39 (ISDI…AGMI), 50-70 (MAPL…LIYP), and 75-95 (IEQG…YTAI). An N-linked (GlcNAc...) asparagine glycan is attached at Asn-111. The next 4 helical transmembrane spans lie at 112-132 (ITLI…ALAA), 134-154 (IGPA…LSVG), 169-189 (SYTL…FAIL), and 205-225 (LVLW…ICLW).

This sequence belongs to the paxB family.

It localises to the membrane. Its pathway is secondary metabolite biosynthesis. Its function is as follows. Terpene cyclase; part of the gene cluster that mediates the biosynthesis of the indole diterpenes nodulisporic acids (NA). Nodulisporic acid A (NAA) and its chemically modified derivatives are of particular significance because of their highly potent insecticidal activity against blood-feeding arthropods and lack of observable adverse effects on mammals, in particular the tremogenicity associated with the paspaline-derived IDTs is not observed. The geranylgeranyl diphosphate (GGPP) synthase ggs1, localized outside of the cluster, is proposed to catalyze the first step in nodulisporic acid biosynthesis via conversion of farnesyl pyrophosphate and isopentyl pyrophosphate into geranylgeranyl pyrophosphate (GGPP). Condensation of indole-3-glycerol phosphate with GGPP by the prenyl transferase nodC then forms 3-geranylgeranylindole (3-GGI). Epoxidation by the FAD-dependent monooxygenase nodM leads to a single-epoxidized-GGI that is substrate of the terpene cyclase nodB for cyclization to yield emindole SB. The terminal methyl carbon, C28, of emindole SB is then oxidized by the cytochrome P450 monooxygenase nodW to produce nodulisporic acid F (NAF), the pentacyclic core of NAA. NAF is converted to nodulisporic acid E (NAE) via prenylation. This step is probably performed by one of the indole diterpene prenyltransferases nodD1 or nodD2. Several oxidation steps performed by the FAD-linked oxidoreductase nodO and one of the cytochrome P450 monooxygenase nodR, nodX or nodZ further convert NAE to nodulisporic acid D (NAD). NAD is substrate of cytochrome P450 monooxygenase nodJ to produce the precursor of nodulisporic acid C (NAC), converted to NAC by one of the indole diterpene prenyltransferases nodD1 or nodD2. The FAD-dependent monooxygenase nodY2 then oxidizes NAC to nodulisporic acid B (NAB). Finally NAB is converted to NAA by one of the cytochrome P450 monooxygenases nodR, nodX or nodZ. This is Terpene cyclase nodB from Hypoxylon pulicicidum.